The following is a 415-amino-acid chain: DNA primase DnaG (415 aa).

The Toprim domain occupies 171 to 250 (DAIIIVEGRA…AFSPRGKSVE (80 aa)). Mg(2+) is bound by residues E177, D219, and D221. The disordered stretch occupies residues 280–323 (ELPGDLGGRPARTAPAHDEGGNSDTTGKQAVSQKRIRDGTSKVP). Polar residues predominate over residues 301 to 311 (NSDTTGKQAVS).

This sequence belongs to the archaeal DnaG primase family. In terms of assembly, forms a ternary complex with MCM helicase and DNA. Requires Mg(2+) as cofactor.

The enzyme catalyses ssDNA + n NTP = ssDNA/pppN(pN)n-1 hybrid + (n-1) diphosphate.. Its function is as follows. RNA polymerase that catalyzes the synthesis of short RNA molecules used as primers for DNA polymerase during DNA replication. The sequence is that of DNA primase DnaG from Methanoregula boonei (strain DSM 21154 / JCM 14090 / 6A8).